The following is a 213-amino-acid chain: Proteasome subunit beta (213 aa).

The propeptide at 1–11 is removed in mature form; by autocatalysis; that stretch reads MSMIEEKIYKG. The Nucleophile role is filled by T12.

This sequence belongs to the peptidase T1B family. The 20S proteasome core is composed of 14 alpha and 14 beta subunits that assemble into four stacked heptameric rings, resulting in a barrel-shaped structure. The two inner rings, each composed of seven catalytic beta subunits, are sandwiched by two outer rings, each composed of seven alpha subunits. The catalytic chamber with the active sites is on the inside of the barrel. Has probably a gated structure, the ends of the cylinder being occluded by the N-termini of the alpha-subunits. Is likely capped at one or both ends by the proteasome regulatory ATPase, PAN.

Its subcellular location is the cytoplasm. The enzyme catalyses Cleavage of peptide bonds with very broad specificity.. Its activity is regulated as follows. The formation of the proteasomal ATPase PAN-20S proteasome complex, via the docking of the C-termini of PAN into the intersubunit pockets in the alpha-rings, triggers opening of the gate for substrate entry. Interconversion between the open-gate and close-gate conformations leads to a dynamic regulation of the 20S proteasome proteolysis activity. Component of the proteasome core, a large protease complex with broad specificity involved in protein degradation. This chain is Proteasome subunit beta, found in Archaeoglobus fulgidus (strain ATCC 49558 / DSM 4304 / JCM 9628 / NBRC 100126 / VC-16).